A 98-amino-acid chain; its full sequence is NADH-ubiquinone oxidoreductase chain 4L (98 aa).

The next 3 helical transmembrane spans lie at methionine 1–methionine 21, serine 29–methionine 49, and isoleucine 61–isoleucine 81.

Belongs to the complex I subunit 4L family. As to quaternary structure, core subunit of respiratory chain NADH dehydrogenase (Complex I) which is composed of 45 different subunits.

The protein localises to the mitochondrion inner membrane. The enzyme catalyses a ubiquinone + NADH + 5 H(+)(in) = a ubiquinol + NAD(+) + 4 H(+)(out). Its function is as follows. Core subunit of the mitochondrial membrane respiratory chain NADH dehydrogenase (Complex I) which catalyzes electron transfer from NADH through the respiratory chain, using ubiquinone as an electron acceptor. Part of the enzyme membrane arm which is embedded in the lipid bilayer and involved in proton translocation. This is NADH-ubiquinone oxidoreductase chain 4L (MT-ND4L) from Procyon lotor (Raccoon).